The sequence spans 883 residues: Phosphoenolpyruvate carboxylase (883 aa).

Catalysis depends on residues His-138 and Lys-546.

The protein belongs to the PEPCase type 1 family. Mg(2+) serves as cofactor.

The enzyme catalyses oxaloacetate + phosphate = phosphoenolpyruvate + hydrogencarbonate. Forms oxaloacetate, a four-carbon dicarboxylic acid source for the tricarboxylic acid cycle. The polypeptide is Phosphoenolpyruvate carboxylase (Shigella dysenteriae serotype 1 (strain Sd197)).